We begin with the raw amino-acid sequence, 148 residues long: uncharacterized protein (148 aa).

In terms of domain architecture, N-acetyltransferase spans Q8–N148.

It belongs to the acetyltransferase family.

This is an uncharacterized protein from Bacillus subtilis (strain 168).